Reading from the N-terminus, the 1013-residue chain is Endosome/lysosome-associated apoptosis and autophagy regulator 1 (1013 aa).

The N-terminal stretch at 1–41 is a signal peptide; the sequence is MAEPGHSHHLSARVRGRTERRIPRLWRLLLWAGTAFQVTQG. At 42 to 910 the chain is on the extracellular side; the sequence is TGPELHACKE…ICKTIDFWLK (869 aa). Asparagine 153 is a glycosylation site (N-linked (GlcNAc...) asparagine). 3 disulfides stabilise this stretch: cysteine 278–cysteine 295, cysteine 308–cysteine 330, and cysteine 311–cysteine 342. 2 N-linked (GlcNAc...) asparagine glycosylation sites follow: asparagine 404 and asparagine 672. Positions 656-858 constitute an MRH domain; that stretch reads NDCTFSRNTP…LWESAAACPL (203 aa). Cystine bridges form between cysteine 658–cysteine 704, cysteine 714–cysteine 739, cysteine 808–cysteine 844, and cysteine 820–cysteine 856. The helical transmembrane segment at 911 to 931 threads the bilayer; that stretch reads VGISAGTCTAILLTVLTCYFW. Residues 932 to 1013 are Cytoplasmic-facing; it reads KKNQKLEYKY…TSSGGLDMDL (82 aa).

Belongs to the ELAPOR family. In terms of assembly, interacts with HSPA5; may regulate the function of HSPA5 in apoptosis and cell proliferation. In terms of tissue distribution, expressed in normal endometrium but overexpressed in endometroid tumors.

It is found in the cell membrane. The protein localises to the late endosome membrane. The protein resides in the golgi apparatus. Its subcellular location is the trans-Golgi network membrane. It localises to the lysosome membrane. It is found in the endoplasmic reticulum membrane. Its function is as follows. May protect cells from cell death by inducing cytosolic vacuolization and up-regulating the autophagy pathway. May play a role in apoptosis and cell proliferation through its interaction with HSPA5. The protein is Endosome/lysosome-associated apoptosis and autophagy regulator 1 of Homo sapiens (Human).